A 443-amino-acid chain; its full sequence is Carboxypeptidase M (443 aa).

The signal sequence occupies residues 1–17 (MDFPCLWLGLLLPLVAA). One can recognise a Peptidase M14 domain in the interval 21 to 311 (NYHRQEGMEA…ASLIEYIKQV (291 aa)). A glycan (N-linked (GlcNAc...) asparagine) is linked at Asn38. Residues His83 and Glu86 each contribute to the Zn(2+) site. 2 N-linked (GlcNAc...) asparagine glycosylation sites follow: Asn115 and Asn164. Cystine bridges form between Cys138/Cys285, Cys242/Cys284, and Cys341/Cys410. His190 is a binding site for Zn(2+). Glu281 acts as the Proton donor/acceptor in catalysis. Residues Asn363 and Asn384 are each glycosylated (N-linked (GlcNAc...) asparagine). Ser423 carries GPI-anchor amidated serine lipidation. Residues 424 to 443 (AATKPSLFLFLVSLLHIFFK) constitute a propeptide, removed in mature form.

This sequence belongs to the peptidase M14 family. The cofactor is Zn(2+).

The protein localises to the cell membrane. It carries out the reaction Cleavage of C-terminal arginine or lysine residues from polypeptides.. Inhibited by O-phenanthroline and MGTA and activated by cobalt. Functionally, specifically removes C-terminal basic residues (Arg or Lys) from peptides and proteins. It is believed to play important roles in the control of peptide hormone and growth factor activity at the cell surface, and in the membrane-localized degradation of extracellular proteins. This Homo sapiens (Human) protein is Carboxypeptidase M (CPM).